A 381-amino-acid chain; its full sequence is MESIGIVAPQTMHFAEPLRLQSGSVIGNYQLVVETYGELNAARSNAVLVCHALNASHHVAGIYADDPRSTGWWDNMVGPGKPLDTNRFFVIGVNNLGSCFGSTGPMSDDPSTGQPYGARFPVVTVEDWVHAQARVADAFGIDRFAAVMGGSLGGMQALAWSLMYPDRVAHCIDIASTPKLSAQNIAFNEVARSAILSDPDFHGGNYYAHGVKPKRGLRVARMIGHITYLSDDDMAEKFGRALRRADGALDAYNFSFDVEFEVESYLRYQGDKFADYFDANTYLLITRALDYFDPAKAFDGNLTAALAHTQAKYLIASFSTDWRFAPARSREIVKALLDNKRTVSYAEIDAPHGHDAFLLDDARYHNLIRAYYERIANEVGA.

In terms of domain architecture, AB hydrolase-1 spans 45–360 (NAVLVCHALN…PHGHDAFLLD (316 aa)). Catalysis depends on S151, which acts as the Nucleophile. R221 provides a ligand contact to substrate. Catalysis depends on residues D321 and H354. D355 contributes to the substrate binding site.

It belongs to the AB hydrolase superfamily. MetX family. Homodimer.

It localises to the cytoplasm. The catalysed reaction is L-homoserine + succinyl-CoA = O-succinyl-L-homoserine + CoA. Its pathway is amino-acid biosynthesis; L-methionine biosynthesis via de novo pathway; O-succinyl-L-homoserine from L-homoserine: step 1/1. Its function is as follows. Transfers a succinyl group from succinyl-CoA to L-homoserine, forming succinyl-L-homoserine. This Burkholderia vietnamiensis (strain G4 / LMG 22486) (Burkholderia cepacia (strain R1808)) protein is Homoserine O-succinyltransferase.